We begin with the raw amino-acid sequence, 225 residues long: 3-demethoxyubiquinol 3-hydroxylase (225 aa).

Polar residues predominate over residues 1-11; sequence MSVASTSSGFT. The tract at residues 1 to 20 is disordered; sequence MSVASTSSGFTPFSRRRGPL. Glutamate 74, glutamate 104, histidine 107, glutamate 156, glutamate 188, and histidine 191 together coordinate Fe cation. The tract at residues 181-203 is disordered; it reads VSQMKDDEAQHRASAERAGGVPL. Basic and acidic residues predominate over residues 184 to 195; it reads MKDDEAQHRASA.

The protein belongs to the COQ7 family. Fe cation serves as cofactor.

It is found in the cell membrane. The enzyme catalyses a 5-methoxy-2-methyl-3-(all-trans-polyprenyl)benzene-1,4-diol + AH2 + O2 = a 3-demethylubiquinol + A + H2O. It functions in the pathway cofactor biosynthesis; ubiquinone biosynthesis. Functionally, catalyzes the hydroxylation of 2-nonaprenyl-3-methyl-6-methoxy-1,4-benzoquinol during ubiquinone biosynthesis. This Bordetella petrii (strain ATCC BAA-461 / DSM 12804 / CCUG 43448) protein is 3-demethoxyubiquinol 3-hydroxylase.